The primary structure comprises 76 residues: Antimicrobial peptide lumbricin-1 (76 aa).

The propeptide at Met-1 to Thr-14 is removed in mature form.

Its function is as follows. Displays antimicrobial activity against the Gram-positive bacteria B.subtilis ATCC 62037, S.aureus ATCC 15752 and S.mutans ATCC 25175, the Gram-negative bacteria E.coli ATCC 27325, P.putida ATCC 17426 and Serratia sp. ATCC 21074, and the fungi C.albicans ATCC 10231, C.neoformans ATCC 34881 and S.cerevisiae ATCC 44774. Does not possess hemolytic activity. The chain is Antimicrobial peptide lumbricin-1 from Lumbricus rubellus (Humus earthworm).